We begin with the raw amino-acid sequence, 276 residues long: Probable endonuclease 4 (276 aa).

Zn(2+) contacts are provided by His-66, His-106, Glu-141, Asp-175, His-178, His-210, Asp-223, His-225, and Glu-255.

The protein belongs to the AP endonuclease 2 family. Zn(2+) serves as cofactor.

The catalysed reaction is Endonucleolytic cleavage to 5'-phosphooligonucleotide end-products.. In terms of biological role, endonuclease IV plays a role in DNA repair. It cleaves phosphodiester bonds at apurinic or apyrimidinic (AP) sites, generating a 3'-hydroxyl group and a 5'-terminal sugar phosphate. This chain is Probable endonuclease 4, found in Heliobacterium modesticaldum (strain ATCC 51547 / Ice1).